Reading from the N-terminus, the 25-residue chain is Caerin-2.2 (25 aa).

It belongs to the frog skin active peptide (FSAP) family. Caerin subfamily. In terms of tissue distribution, expressed by the skin parotoid and/or rostral glands.

It localises to the secreted. Functionally, antimicrobial peptide, that adopts an alpha helical conformation which can disrupt bacterial membranes. Each caerin displays a different antimicrobial specificity. The sequence is that of Caerin-2.2 from Ranoidea caerulea (Green tree frog).